The primary structure comprises 387 residues: Succinate--CoA ligase [ADP-forming] subunit beta (387 aa).

ATP is bound by residues lysine 46, 53 to 55 (GRG), glutamate 99, cysteine 102, and glutamate 107. Positions 196 and 210 each coordinate Mg(2+). Substrate contacts are provided by residues asparagine 261 and 318–320 (GIV).

This sequence belongs to the succinate/malate CoA ligase beta subunit family. Heterotetramer of two alpha and two beta subunits. Mg(2+) is required as a cofactor.

It catalyses the reaction succinate + ATP + CoA = succinyl-CoA + ADP + phosphate. It carries out the reaction GTP + succinate + CoA = succinyl-CoA + GDP + phosphate. The protein operates within carbohydrate metabolism; tricarboxylic acid cycle; succinate from succinyl-CoA (ligase route): step 1/1. Succinyl-CoA synthetase functions in the citric acid cycle (TCA), coupling the hydrolysis of succinyl-CoA to the synthesis of either ATP or GTP and thus represents the only step of substrate-level phosphorylation in the TCA. The beta subunit provides nucleotide specificity of the enzyme and binds the substrate succinate, while the binding sites for coenzyme A and phosphate are found in the alpha subunit. In Campylobacter hominis (strain ATCC BAA-381 / DSM 21671 / CCUG 45161 / LMG 19568 / NCTC 13146 / CH001A), this protein is Succinate--CoA ligase [ADP-forming] subunit beta.